The following is a 309-amino-acid chain: Zinc finger CCCH domain-containing protein 31 (309 aa).

Residues 1–36 form a disordered region; sequence MEGAGAARKRSRPDTANGGAAGGKRSRETESFQTGL. 2 consecutive C3H1-type zinc fingers follow at residues 37–65 and 103–131; these read SSKL…HFVP and SGKT…HGER. The disordered stretch occupies residues 86 to 106; it reads ARAPMDHAAGGNSHPASSGKT. One can recognise a KH domain in the interval 175 to 239; sequence SATAKISVDA…DQIKQASNMV (65 aa). Positions 249-273 are disordered; the sequence is STPAKKPAGSAAGAAPAGRGGPGGR. Residues 251–265 show a composition bias toward low complexity; the sequence is PAKKPAGSAAGAAPA. The segment at 275-302 adopts a C3H1-type 3 zinc-finger fold; sequence NYKTKLCENFVKGTCTFGDRCHFAHGEN.

This chain is Zinc finger CCCH domain-containing protein 31, found in Oryza sativa subsp. japonica (Rice).